The following is a 177-amino-acid chain: 2''-aminoglycoside nucleotidyltransferase (177 aa).

The Mg(2+) site is built by aspartate 44, aspartate 46, and aspartate 86. The active-site Proton acceptor is the aspartate 86.

Mg(2+) is required as a cofactor.

It catalyses the reaction nucleoside triphosphate + gentamicin = diphosphate + 2''-nucleotidylgentamicin.. Functionally, mediates bacterial resistance to kanamycin, gentamicin, dibekacin, sisomicin, neomycin and tobramycin by adenylating the 2''-hydroxyl group of these antibiotics. The polypeptide is 2''-aminoglycoside nucleotidyltransferase (aadB) (Klebsiella pneumoniae).